The primary structure comprises 374 residues: MNSIVSTVRGILTLSRSETFDSPRDEAKSDLKVLSVAWNQVCSGFIVGTNHGFNVYSCKPMIKKSISRAPHESGFKVAEMLFLSNLFAFVGNGYNNSEYPPNKVFVWDDYRNCCLSELTFKSEVIAVKLAREHVVVVLKQNIYVYTFNNLKVDRVIETLMNPKGLCCVTHVESKAVLACPGFHPGQVQVHDLRWNVIKFIKAHDSAIACMTLTLDGSLLATASTKGTLIRIFNAVDGTLLQEFRRGVERAEIYNVAISSNLKWVAASSEKGTLHVFRLRPDILSFDPASSSSFIRVILPKYLYENERSFAQFSLPASTKFIVGFGSENTVLLVGIDGSFRRCKFDHADGGQMVELEHKYFFSLQETGNTMVGGV.

4 WD repeats span residues 28–66 (KSDL…KKSI), 72–117 (ESGF…CLSE), 202–242 (AHDS…LLQE), and 247–286 (VERA…LSFD).

This sequence belongs to the WD repeat PROPPIN family. In terms of assembly, component of the PI(3,5)P2 regulatory complex at least composed of ATG18, SAC/FIG4, FAB1 and VAC14.

Its subcellular location is the preautophagosomal structure membrane. The protein localises to the vacuole membrane. Its function is as follows. The PI(3,5)P2 regulatory complex regulates both the synthesis and turnover of phosphatidylinositol 3,5-bisphosphate (PtdIns(3,5)P2). Required for autophagy. This is Autophagy-related protein 18e (ATG18E) from Arabidopsis thaliana (Mouse-ear cress).